Here is a 420-residue protein sequence, read N- to C-terminus: FLYWCH transcription factor 3 (420 aa).

Over residues 87–104 (SSTSPDSQPSSSSSVMSS) the composition is skewed to low complexity. 2 disordered regions span residues 87–107 (SSTS…STDE) and 119–138 (KINK…YTPR). Over residues 123–134 (AQRQSSPNSSKP) the composition is skewed to polar residues. An FLYWCH-type zinc finger spans residues 140 to 195 (IRERVLFDEHLYVFDKCSYDSKKRFFRCERKNTCPARIHTPFDAERVIHKVQVHNH).

In terms of biological role, probable transcription factor. May bind to the promoters of target genes, including micro-RNA genes, in order to repress expression, and acting redundantly with flh-2. The protein is FLYWCH transcription factor 3 of Caenorhabditis elegans.